The following is a 246-amino-acid chain: 2-deoxyglucose-6-phosphate phosphatase 2 (246 aa).

Catalysis depends on Asp83, which acts as the Nucleophile. Asp83 lines the Mg(2+) pocket. Substrate is bound by residues Asp83, Glu92, and 146-149 (DVKN). Asp183 is a binding site for Mg(2+).

It belongs to the HAD-like hydrolase superfamily. DOG/GPP family. It depends on Mg(2+) as a cofactor.

The catalysed reaction is 2-deoxy-D-glucose 6-phosphate + H2O = 2-deoxy-D-glucose + phosphate. Its function is as follows. Phosphatase that is active on 2-deoxy-D-glucose 6-phosphate (2-DOG-6P), but not very active on fructose-1-P. This chain is 2-deoxyglucose-6-phosphate phosphatase 2, found in Saccharomyces cerevisiae (strain ATCC 204508 / S288c) (Baker's yeast).